Consider the following 303-residue polypeptide: MKGKEEKEGGARLGAGGGSPEKSPSAQELKEQGNRLFVGRKYPEAAACYGRAITRNPLVAVYYTNRALCYLKMQQHEQALADCRRALELDGQSVKAHFFLGQCQLEMESYDEAIANLQRAYSLAKEQRLNFGDDIPSALRIAKKKRWNSIEERRIHQESELHSYLSRLIAAERERELEECQRNHEGDEDDSHVRAQQACIEAKHDKYMADMDELFSQVDEKRKKRDIPDYLCGKISFELMREPCITPSGITYDRKDIEEHLQRVGHFDPVTRSPLTQEQLIPNLAMKEVIDAFISENGWVEDY.

Over residues 1–10 (MKGKEEKEGG) the composition is skewed to basic and acidic residues. Positions 1–30 (MKGKEEKEGGARLGAGGGSPEKSPSAQELK) are disordered. Residue lysine 2 forms a Glycyl lysine isopeptide (Lys-Gly) (interchain with G-Cter in ubiquitin) linkage. Serine 19 is subject to Phosphoserine. Residue lysine 22 forms a Glycyl lysine isopeptide (Lys-Gly) (interchain with G-Cter in ubiquitin) linkage. Phosphoserine occurs at positions 23 and 25. 3 TPR repeats span residues 26 to 59 (AQEL…NPLV), 60 to 93 (AVYY…DGQS), and 95 to 127 (KAHF…AKEQ). The required for interaction with MAPK7 stretch occupies residues 101-200 (GQCQLEMESY…SHVRAQQACI (100 aa)). Residues 142–196 (AKKKRWNSIEERRIHQESELHSYLSRLIAAERERELEECQRNHEGDEDDSHVRAQ) are required for interaction with and ubiquitination of MYOCD. The segment at 143–197 (KKKRWNSIEERRIHQESELHSYLSRLIAAERERELEECQRNHEGDEDDSHVRAQQ) is required for interaction with FOXO1. Residues 143 to 303 (KKKRWNSIEE…ISENGWVEDY (161 aa)) form a required for ubiquitination of FOXO1 region. Serine 149 is modified (phosphoserine). Residues lysine 221 and lysine 255 each participate in a glycyl lysine isopeptide (Lys-Gly) (interchain with G-Cter in ubiquitin) cross-link. The region spanning 226 to 300 (DIPDYLCGKI…DAFISENGWV (75 aa)) is the U-box domain. Serine 273 is subject to Phosphoserine.

As to quaternary structure, homodimer. Interacts with BAG2. Interacts with E2 ubiquitin conjugating enzymes UBE2D1, UBE2D2 and UBE2D3. Detected in a ternary complex containing STUB1, HSPA1A and HSPBP1. Part of a complex composed of STUB1/CHIP, VCP/p97, CHRNA3, and UBXN2A that modulates the ubiquitination and endoplasmic reticulum-associated degradation (ERAD) of CHRNA3. Within the complex UBXN2A acts as a scaffold protein required for the interaction of CHRNA3 with VCP/p97, this interaction also inhibits CHRNA3 ubiquitination by STUB1/CHIP and subsequently ERAD. Interacts with MKKS. Interacts with DNAAF4. Interacts (when monoubiquitinated) with ATXN3. Interacts with UBE2W. Interacts (via the U-box domain) with the UBE2V2-UBE2N heterodimer; the complex has a specific 'Lys-63'-linked polyubiquitination activity. Interacts with DNAJB6. Interacts with FLCN. Interacts with HSP90AA1. Interacts with HSP90. Interacts with UBE2N and UBE2V1. Interacts (via TPR repeats) with HSPA8 (via C-terminus). Interacts (via TPR repeats) with HSPA1A (via C-terminus). Interacts with the non-acetylated form of HSPA1A and HSPA1B. Interacts with SMAD3 and HSP90AB1. Interacts with UBE4B. Interacts with PRMT5. Interacts with MYOCD (via C-terminus). Interacts with FOXO1 (when phosphorylated on 'Ser-256'). Interacts with MAPK7/ERK5; the interaction is enhanced in the presence of IGF1 or MAP2K5 and promotes STUB1/CHIP E3 ligase activity. Interacts with and ubiquitinates ESR1; the interaction is promoted in the absence of estradiol (17-beta-estradiol/E2). Interacts with ESR2. Interacts with and ubiquitinates NFATC3; HSPA1A/HSP70 is required as a co-chaperone. In macrophages, interacts with PAQR3; the interaction promotes PPARG poylubiquitination and STUB1-mediated degradation. Component of the chaperone-assisted selective autophagy (CASA) complex consisting of BAG3, HSPA8/HSC70, HSPB8 and STUB1/CHIP. Post-translationally, monoubiquitinated at Lys-2 following cell stress by UBE2W, promoting the interaction with ATXN3. Auto-ubiquitinated; mediated by UBE2D1 and UBE2D2 and enhanced in the presence of MAP2K5. As to expression, expressed in differentiated myotubes (at protein level). Highly expressed in skeletal muscle, heart, pancreas, brain and placenta. Detected in kidney, liver and lung.

It is found in the cytoplasm. It localises to the nucleus. The protein resides in the mitochondrion. It carries out the reaction S-ubiquitinyl-[E2 ubiquitin-conjugating enzyme]-L-cysteine + [acceptor protein]-L-lysine = [E2 ubiquitin-conjugating enzyme]-L-cysteine + N(6)-ubiquitinyl-[acceptor protein]-L-lysine.. The protein operates within protein modification; protein ubiquitination. Functionally, E3 ubiquitin-protein ligase which targets misfolded chaperone substrates towards proteasomal degradation. Plays a role in the maintenance of mitochondrial morphology and promotes mitophagic removal of dysfunctional mitochondria; thereby acts as a protector against apoptosis in response to cellular stress. Negatively regulates vascular smooth muscle contraction, via degradation of the transcriptional activator MYOCD and subsequent loss of transcription of genes involved in vascular smooth muscle contraction. Promotes survival and proliferation of cardiac smooth muscle cells via ubiquitination and degradation of FOXO1, resulting in subsequent repression of FOXO1-mediated transcription of pro-apoptotic genes. Ubiquitinates ICER-type isoforms of CREM and targets them for proteasomal degradation, thereby acts as a positive effector of MAPK/ERK-mediated inhibition of apoptosis in cardiomyocytes. Inhibits lipopolysaccharide-induced apoptosis and hypertrophy in cardiomyocytes, via ubiquitination and subsequent proteasomal degradation of NFATC3. Collaborates with ATXN3 in the degradation of misfolded chaperone substrates: ATXN3 restricting the length of ubiquitin chain attached to STUB1/CHIP substrates and preventing further chain extension. Ubiquitinates NOS1 in concert with Hsp70 and Hsp40. Modulates the activity of several chaperone complexes, including Hsp70, Hsc70 and Hsp90. Ubiquitinates CHRNA3 targeting it for endoplasmic reticulum-associated degradation in cortical neurons, as part of the STUB1-VCP-UBXN2A complex. Ubiquitinates and promotes ESR1 proteasomal degradation in response to age-related circulating estradiol (17-beta-estradiol/E2) decline, thereby promotes neuronal apoptosis in response to ischemic reperfusion injury. Mediates transfer of non-canonical short ubiquitin chains to HSPA8 that have no effect on HSPA8 degradation. Mediates polyubiquitination of DNA polymerase beta (POLB) at 'Lys-41', 'Lys-61' and 'Lys-81', thereby playing a role in base-excision repair: catalyzes polyubiquitination by amplifying the HUWE1/ARF-BP1-dependent monoubiquitination and leading to POLB-degradation by the proteasome. Mediates polyubiquitination of CYP3A4. Ubiquitinates EPHA2 and may regulate the receptor stability and activity through proteasomal degradation. Acts as a co-chaperone for HSPA1A and HSPA1B chaperone proteins and promotes ubiquitin-mediated protein degradation. Negatively regulates the suppressive function of regulatory T-cells (Treg) during inflammation by mediating the ubiquitination and degradation of FOXP3 in a HSPA1A/B-dependent manner. Catalyzes monoubiquitination of SIRT6, preventing its degradation by the proteasome. Likely mediates polyubiquitination and down-regulates plasma membrane expression of PD-L1/CD274, an immune inhibitory ligand critical for immune tolerance to self and antitumor immunity. Negatively regulates TGF-beta signaling by modulating the basal level of SMAD3 via ubiquitin-mediated degradation. Plays a role in the degradation of TP53. Mediates ubiquitination of RIPK3 leading to its subsequent proteasome-dependent degradation. May regulate myosin assembly in striated muscles together with UBE4B and VCP/p97 by targeting myosin chaperone UNC45B for proteasomal degradation. Ubiquitinates PPARG in macrophages playing a role in M2 macrophages polarization and angiogenesis. The chain is E3 ubiquitin-protein ligase CHIP from Homo sapiens (Human).